Reading from the N-terminus, the 495-residue chain is Protein nucleotidyltransferase YdiU (495 aa).

Residues G92, G94, R95, K114, D126, G127, R177, and R184 each contribute to the ATP site. The Proton acceptor role is filled by D261. Mg(2+) contacts are provided by N262 and D271. D271 contributes to the ATP binding site.

This sequence belongs to the SELO family. The cofactor is Mg(2+). Mn(2+) serves as cofactor.

The enzyme catalyses L-seryl-[protein] + ATP = 3-O-(5'-adenylyl)-L-seryl-[protein] + diphosphate. It catalyses the reaction L-threonyl-[protein] + ATP = 3-O-(5'-adenylyl)-L-threonyl-[protein] + diphosphate. It carries out the reaction L-tyrosyl-[protein] + ATP = O-(5'-adenylyl)-L-tyrosyl-[protein] + diphosphate. The catalysed reaction is L-histidyl-[protein] + UTP = N(tele)-(5'-uridylyl)-L-histidyl-[protein] + diphosphate. The enzyme catalyses L-seryl-[protein] + UTP = O-(5'-uridylyl)-L-seryl-[protein] + diphosphate. It catalyses the reaction L-tyrosyl-[protein] + UTP = O-(5'-uridylyl)-L-tyrosyl-[protein] + diphosphate. Nucleotidyltransferase involved in the post-translational modification of proteins. It can catalyze the addition of adenosine monophosphate (AMP) or uridine monophosphate (UMP) to a protein, resulting in modifications known as AMPylation and UMPylation. The sequence is that of Protein nucleotidyltransferase YdiU from Bordetella bronchiseptica (strain ATCC BAA-588 / NCTC 13252 / RB50) (Alcaligenes bronchisepticus).